The sequence spans 691 residues: tRNA-dihydrouridine(47) synthase [NAD(P)(+)]-like (691 aa).

Ser2 carries the N-acetylserine modification. The segment at 55–94 (PPPPSRSVKQNDAADVRAPQSGLVQEKKSKRQLKRERREQ) is disordered. 2 C3H1-type zinc fingers span residues 94 to 125 (QSTI…HDIE) and 138 to 163 (QCPF…HRDI). The interval 259–286 (LETEEVRPMKKAKSEDQKNSKTGDVGGV) is disordered. The span at 262–279 (EEVRPMKKAKSEDQKNSK) shows a compositional bias: basic and acidic residues. FMN is bound by residues 344-346 (PLT) and Gln398. Cys429 serves as the catalytic Proton donor. FMN is bound by residues Lys468, His498, 531-533 (NGD), and 556-557 (AR).

It belongs to the Dus family. Dus3 subfamily. The cofactor is FMN.

The catalysed reaction is 5,6-dihydrouridine(47) in tRNA + NAD(+) = uridine(47) in tRNA + NADH + H(+). It catalyses the reaction 5,6-dihydrouridine(47) in tRNA + NADP(+) = uridine(47) in tRNA + NADPH + H(+). It carries out the reaction a 5,6-dihydrouridine in mRNA + NAD(+) = a uridine in mRNA + NADH + H(+). The enzyme catalyses a 5,6-dihydrouridine in mRNA + NADP(+) = a uridine in mRNA + NADPH + H(+). In terms of biological role, catalyzes the synthesis of dihydrouridine, a modified base found in the D-loop of most tRNAs. Specifically modifies U47 in cytoplasmic tRNAs. Catalyzes the synthesis of dihydrouridine in some mRNAs, thereby affecting their translation. The polypeptide is tRNA-dihydrouridine(47) synthase [NAD(P)(+)]-like (Arabidopsis thaliana (Mouse-ear cress)).